Reading from the N-terminus, the 513-residue chain is ATP synthase subunit alpha (513 aa).

169 to 176 serves as a coordination point for ATP; that stretch reads GDRQTGKT.

Belongs to the ATPase alpha/beta chains family. As to quaternary structure, F-type ATPases have 2 components, CF(1) - the catalytic core - and CF(0) - the membrane proton channel. CF(1) has five subunits: alpha(3), beta(3), gamma(1), delta(1), epsilon(1). CF(0) has three main subunits: a(1), b(2) and c(9-12). The alpha and beta chains form an alternating ring which encloses part of the gamma chain. CF(1) is attached to CF(0) by a central stalk formed by the gamma and epsilon chains, while a peripheral stalk is formed by the delta and b chains.

The protein resides in the cell inner membrane. It catalyses the reaction ATP + H2O + 4 H(+)(in) = ADP + phosphate + 5 H(+)(out). In terms of biological role, produces ATP from ADP in the presence of a proton gradient across the membrane. The alpha chain is a regulatory subunit. In Cupriavidus pinatubonensis (strain JMP 134 / LMG 1197) (Cupriavidus necator (strain JMP 134)), this protein is ATP synthase subunit alpha.